A 631-amino-acid chain; its full sequence is 1-deoxy-D-xylulose-5-phosphate synthase (631 aa).

Thiamine diphosphate contacts are provided by residues His-72 and 113–115 (GHA). Asp-144 serves as a coordination point for Mg(2+). Residues 145–146 (GA), Asn-174, Tyr-287, and Glu-370 contribute to the thiamine diphosphate site. Asn-174 lines the Mg(2+) pocket.

This sequence belongs to the transketolase family. DXPS subfamily. Homodimer. Mg(2+) is required as a cofactor. Thiamine diphosphate serves as cofactor.

The enzyme catalyses D-glyceraldehyde 3-phosphate + pyruvate + H(+) = 1-deoxy-D-xylulose 5-phosphate + CO2. The protein operates within metabolic intermediate biosynthesis; 1-deoxy-D-xylulose 5-phosphate biosynthesis; 1-deoxy-D-xylulose 5-phosphate from D-glyceraldehyde 3-phosphate and pyruvate: step 1/1. Its function is as follows. Catalyzes the acyloin condensation reaction between C atoms 2 and 3 of pyruvate and glyceraldehyde 3-phosphate to yield 1-deoxy-D-xylulose-5-phosphate (DXP). The sequence is that of 1-deoxy-D-xylulose-5-phosphate synthase from Prochlorococcus marinus (strain MIT 9515).